A 660-amino-acid chain; its full sequence is MTDRIVPATLVFREDGTVVSPLYGDIYHSAAGALAQADHVFIRGNGLPERWRHERAFTIIETGFGTGCNFLATWAAWRADPSHCERLHFVSVEKHPFAREDLRRAAAHIVAYTTITTITPIAPLVDELANAWPALTPGVHRLEFDDGRITLTLVFGDALDVLPNLALRAHAFYLDGFAPSKNADLWSPAIFKSLAKLADERATFATYTSSGAVKRALDEAGFAYRKVDGFAGKRAMLVGEFAPRWRVRRHEPPRAFSTDRRDAIVIGAGLAGCAVVERLAARGWHVTLIERRERIASEASGNPAGVFHPMIARDDNLAARLSRAGFLHALHRWRALERAGHAFSRSTHGLVQLATSDDEFERMRESIDALGVPAELASALSRDDARALLRTDVAHGGWLFAQGGSISPAALAAAQCAAAGDRLSRIVGVEIARLERGGDGRWRALDASGATIAQASVVVVANAADAARIAGLRHAPTQRVRGQLTLLPPGSAPAVPLPVIGDGYVVPLANGVTLTGATYEPDDTDATPREAGHRENLERLERLLPAFSANALDAGALAGRVGFRCVASDRLPLVGELGDEAAAAREAAALTGARLRDVPRATGLYGAFGYGSRGLVWAALGAELIAAQIDGEPWPLERELAEAIDPARFLVRALRHGRVA.

The tract at residues 1-242 is tRNA (mnm(5)s(2)U34)-methyltransferase; sequence MTDRIVPATL…KRAMLVGEFA (242 aa). Residues 266 to 660 are FAD-dependent cmnm(5)s(2)U34 oxidoreductase; it reads IGAGLAGCAV…VRALRHGRVA (395 aa).

In the N-terminal section; belongs to the methyltransferase superfamily. tRNA (mnm(5)s(2)U34)-methyltransferase family. The protein in the C-terminal section; belongs to the DAO family. The cofactor is FAD.

The protein localises to the cytoplasm. It catalyses the reaction 5-aminomethyl-2-thiouridine(34) in tRNA + S-adenosyl-L-methionine = 5-methylaminomethyl-2-thiouridine(34) in tRNA + S-adenosyl-L-homocysteine + H(+). Catalyzes the last two steps in the biosynthesis of 5-methylaminomethyl-2-thiouridine (mnm(5)s(2)U) at the wobble position (U34) in tRNA. Catalyzes the FAD-dependent demodification of cmnm(5)s(2)U34 to nm(5)s(2)U34, followed by the transfer of a methyl group from S-adenosyl-L-methionine to nm(5)s(2)U34, to form mnm(5)s(2)U34. In Burkholderia pseudomallei (strain K96243), this protein is tRNA 5-methylaminomethyl-2-thiouridine biosynthesis bifunctional protein MnmC.